Reading from the N-terminus, the 169-residue chain is MLRSEKPVAVEDIVNIYKESPSVIITHYHGLTVSQVSSLREALKSKEVGFKVVKNTLAKIAAKHTGLDSITDLFAGPSAIVYSKEPVEMARLVVNFANSNDNLKIIGGIVDNHILDTYAIKELAKLPSLHELRGKIVGLLQAPATKVVGVLQATSSSIARVIHAHAIKH.

This sequence belongs to the universal ribosomal protein uL10 family. In terms of assembly, part of the ribosomal stalk of the 50S ribosomal subunit. The N-terminus interacts with L11 and the large rRNA to form the base of the stalk. The C-terminus forms an elongated spine to which L12 dimers bind in a sequential fashion forming a multimeric L10(L12)X complex.

In terms of biological role, forms part of the ribosomal stalk, playing a central role in the interaction of the ribosome with GTP-bound translation factors. In Rickettsia typhi (strain ATCC VR-144 / Wilmington), this protein is Large ribosomal subunit protein uL10.